Consider the following 283-residue polypeptide: 2-dehydro-3-deoxyphosphooctonate aldolase (283 aa).

This sequence belongs to the KdsA family.

It is found in the cytoplasm. The catalysed reaction is D-arabinose 5-phosphate + phosphoenolpyruvate + H2O = 3-deoxy-alpha-D-manno-2-octulosonate-8-phosphate + phosphate. The protein operates within carbohydrate biosynthesis; 3-deoxy-D-manno-octulosonate biosynthesis; 3-deoxy-D-manno-octulosonate from D-ribulose 5-phosphate: step 2/3. Its pathway is bacterial outer membrane biogenesis; lipopolysaccharide biosynthesis. In Laribacter hongkongensis (strain HLHK9), this protein is 2-dehydro-3-deoxyphosphooctonate aldolase.